Here is a 720-residue protein sequence, read N- to C-terminus: Methionine--tRNA ligase (720 aa).

The short motif at 27–37 (PYANGQIHIGH) is the 'HIGH' region element. Zn(2+)-binding residues include Cys158, Cys161, Cys171, and Cys174. The 'KMSKS' region motif lies at 348–352 (KMSKS). Residue Lys351 participates in ATP binding. In terms of domain architecture, tRNA-binding spans 614–720 (DFAKVDLRIA…SGAKPGMRVK (107 aa)).

Belongs to the class-I aminoacyl-tRNA synthetase family. MetG type 1 subfamily. In terms of assembly, homodimer. Zn(2+) serves as cofactor.

It localises to the cytoplasm. It carries out the reaction tRNA(Met) + L-methionine + ATP = L-methionyl-tRNA(Met) + AMP + diphosphate. In terms of biological role, is required not only for elongation of protein synthesis but also for the initiation of all mRNA translation through initiator tRNA(fMet) aminoacylation. The polypeptide is Methionine--tRNA ligase (Burkholderia ambifaria (strain MC40-6)).